Consider the following 364-residue polypeptide: Aminomethyltransferase (364 aa).

Belongs to the GcvT family. The glycine cleavage system is composed of four proteins: P, T, L and H.

The catalysed reaction is N(6)-[(R)-S(8)-aminomethyldihydrolipoyl]-L-lysyl-[protein] + (6S)-5,6,7,8-tetrahydrofolate = N(6)-[(R)-dihydrolipoyl]-L-lysyl-[protein] + (6R)-5,10-methylene-5,6,7,8-tetrahydrofolate + NH4(+). In terms of biological role, the glycine cleavage system catalyzes the degradation of glycine. This is Aminomethyltransferase from Shigella dysenteriae serotype 1 (strain Sd197).